The primary structure comprises 60 residues: Cytotoxin 3 (60 aa).

4 disulfides stabilise this stretch: Cys-3–Cys-21, Cys-14–Cys-38, Cys-42–Cys-53, and Cys-54–Cys-59.

This sequence belongs to the three-finger toxin family. Short-chain subfamily. Type IA cytotoxin sub-subfamily. In terms of assembly, monomer in solution; Homodimer and oligomer in the presence of negatively charged lipids forming a pore with a size ranging between 20 and 30 Angstroms. As to expression, expressed by the venom gland.

It is found in the secreted. It localises to the target cell membrane. Functionally, shows cytolytic activity on many different cells by forming pore in lipid membranes. In vivo, increases heart rate or kills the animal by cardiac arrest. In addition, it binds to heparin with high affinity, interacts with Kv channel-interacting protein 1 (KCNIP1) in a calcium-independent manner, and binds to integrin alpha-V/beta-3 (ITGAV/ITGB3) with moderate affinity. This Naja naja (Indian cobra) protein is Cytotoxin 3.